Consider the following 57-residue polypeptide: Large ribosomal subunit protein uL30 (57 aa).

This sequence belongs to the universal ribosomal protein uL30 family. In terms of assembly, part of the 50S ribosomal subunit.

In Clostridium perfringens (strain ATCC 13124 / DSM 756 / JCM 1290 / NCIMB 6125 / NCTC 8237 / Type A), this protein is Large ribosomal subunit protein uL30.